We begin with the raw amino-acid sequence, 230 residues long: 3-beta-hydroxysteroid-Delta(8),Delta(7)-isomerase (230 aa).

An N-acetylthreonine modification is found at threonine 2. A run of 4 helical transmembrane segments spans residues 29 to 49 (WHILAGLFSVTGVLVVTTWLL), 66 to 86 (LCWFAVCGFIHLVIEGWFVLY), 121 to 141 (METITACLWGPLSLWVVIAFL), and 185 to 205 (FWFYFVFMNALWLVLPGVLVL). The EXPERA domain maps to 61-204 (WRRLSLCWFA…LWLVLPGVLV (144 aa)).

This sequence belongs to the EBP family.

It localises to the endoplasmic reticulum membrane. It is found in the nucleus envelope. The protein resides in the cytoplasmic vesicle. It carries out the reaction lathosterol = 5alpha-cholest-8-en-3beta-ol. The enzyme catalyses zymosterol = 5alpha-cholesta-7,24-dien-3beta-ol. The catalysed reaction is 5,6alpha-epoxy-5alpha-cholestan-3beta-ol + H2O = 5alpha-cholestane-3beta,5,6beta-triol. It catalyses the reaction 5,6beta-epoxy-5beta-cholestan-3beta-ol + H2O = 5alpha-cholestane-3beta,5,6beta-triol. The protein operates within steroid biosynthesis; cholesterol biosynthesis. Its activity is regulated as follows. Cholestenol Delta-isomerase and cholesterol-5,6-epoxide hydrolase (ChEH) activities are inhibited by tamoxifen and the selective AEBS ligand (4-benzyl-phenoxy)-ethyl-N-pyrrolidine (PBPE). ChEH activity is inhibited by oleic acid. Isomerase that catalyzes the conversion of Delta(8)-sterols to their corresponding Delta(7)-isomers a catalytic step in the postlanosterol biosynthesis of cholesterol. Functionally, component of the microsomal antiestrogen binding site (AEBS), a multiproteic complex at the ER membrane that consists of an association between EBP and 7-dehydrocholesterol reductase/DHCR7. This complex is responsible for cholesterol-5,6-epoxide hydrolase (ChEH) activity, which consists in the hydration of cholesterol-5,6-epoxides (5,6-EC) into cholestane-3beta,5alpha,6beta-triol (CT). The precise role of each component of this complex has not been described yet. This Homo sapiens (Human) protein is 3-beta-hydroxysteroid-Delta(8),Delta(7)-isomerase.